The following is a 533-amino-acid chain: NAD(P)H-quinone oxidoreductase chain 4 2 (533 aa).

14 consecutive transmembrane segments (helical) span residues 5–25 (FPWLTVLTLLPLVAAFFIPVL), 33–53 (VRWYALAIALLEFGLSAMVFW), 86–106 (LAVPLILLTGLVNTLAIFAAW), 114–134 (LFYFLMLALYSAQIGVFAAQD), 135–155 (LILFFLIWELELVPVYLLISI), 168–188 (FILYTAVGSLFILIAGLGMAF), 208–228 (ALELLAYAGFLIAFGVKLPIF), 242–262 (SAPVSMVLAGVLLKMGGYGLI), 276–296 (FAPVLIALGVVNIIYGALTAF), 310–330 (ISHMGFVLLGIGALNGIGLNG), 331–351 (AMLQMLSHGLIAAVLFFLAGV), 384–404 (ASLALPGMSGFVSELTVFLGL), 416–436 (VGVIFLAAVGVIITPVYLLSM), and 462–482 (TFIALSLLVPIIAVGMYPKVA).

Belongs to the complex I subunit 4 family.

The protein localises to the cellular thylakoid membrane. It catalyses the reaction a plastoquinone + NADH + (n+1) H(+)(in) = a plastoquinol + NAD(+) + n H(+)(out). The enzyme catalyses a plastoquinone + NADPH + (n+1) H(+)(in) = a plastoquinol + NADP(+) + n H(+)(out). Its function is as follows. NDH-1 shuttles electrons from NAD(P)H, via FMN and iron-sulfur (Fe-S) centers, to quinones in the respiratory chain. The immediate electron acceptor for the enzyme in this species is believed to be plastoquinone. Couples the redox reaction to proton translocation (for every two electrons transferred, four hydrogen ions are translocated across the cytoplasmic membrane), and thus conserves the redox energy in a proton gradient. The protein is NAD(P)H-quinone oxidoreductase chain 4 2 of Thermosynechococcus vestitus (strain NIES-2133 / IAM M-273 / BP-1).